The following is a 312-amino-acid chain: Olfactory receptor 10C1 (312 aa).

Topologically, residues 1–24 (MSANTSMVTEFLLLGFSHLADLQG) are extracellular. The N-linked (GlcNAc...) asparagine glycan is linked to Asn-4. A helical membrane pass occupies residues 25–45 (LLFSVFLTIYLLTVAGNFLIV). At 46–53 (VLVSTDAA) the chain is on the cytoplasmic side. A helical membrane pass occupies residues 54-74 (LQSPMYFFLRTLSALEIGYTS). The Extracellular segment spans residues 75–98 (VTVPLLLHHLLTGRRHISRSGCAL). Cys-96 and Cys-188 are oxidised to a cystine. The helical transmembrane segment at 99 to 119 (QMFFFLFFGATECCLLAAMAY) threads the bilayer. Over 120 to 138 (DRYAAICEPLRYPLLLSHR) the chain is Cytoplasmic. Residues 139-159 (VCLQLAGSAWACGVLVGLGHT) form a helical membrane-spanning segment. Residues 160–196 (PFIFSLPFCGPNTIPQFFCEIQPVLQLVCGDTSLNEL) are Extracellular-facing. A helical transmembrane segment spans residues 197 to 216 (QIILATALLILCPFGLILGS). The Cytoplasmic segment spans residues 217–236 (YGRILVTIFRIPSVAGRRKA). Residues 237 to 257 (FSTCSSHLIMVSLFYGTALFI) form a helical membrane-spanning segment. Residues 258 to 270 (YIRPKASYDPATD) are Extracellular-facing. A helical membrane pass occupies residues 271–291 (PLVSLFYAVVTPILNPIIYSL). Residues 292–312 (RNTEVKAALKRTIQKTVPMEI) are Cytoplasmic-facing.

It belongs to the G-protein coupled receptor 1 family.

The protein resides in the cell membrane. Odorant receptor. This Homo sapiens (Human) protein is Olfactory receptor 10C1 (OR10C1).